A 751-amino-acid chain; its full sequence is Cellulose synthase-like protein G3 (751 aa).

2 helical membrane passes run 47–67 (IYAV…VHSL) and 72–92 (TTLI…MWAT). Residues aspartate 161 and aspartate 466 contribute to the active site. The next 6 helical transmembrane spans lie at 543-563 (CWAF…LALL), 577-597 (FWLY…DFVL), 617-639 (FSSH…THGF), 674-694 (TVAI…FAWG), 697-717 (LVLE…IYEA), and 731-751 (VCFV…VFLK).

Belongs to the glycosyltransferase 2 family. Plant cellulose synthase-like G subfamily.

The protein resides in the golgi apparatus membrane. Functionally, thought to be a Golgi-localized beta-glycan synthase that polymerize the backbones of noncellulosic polysaccharides (hemicelluloses) of plant cell wall. This chain is Cellulose synthase-like protein G3 (CSLG3), found in Arabidopsis thaliana (Mouse-ear cress).